Here is a 254-residue protein sequence, read N- to C-terminus: Triosephosphate isomerase (254 aa).

10-12 (NWK) lines the substrate pocket. The active-site Electrophile is the His99. Glu169 serves as the catalytic Proton acceptor. Residues Gly175, Ser215, and 236-237 (GG) contribute to the substrate site.

It belongs to the triosephosphate isomerase family. Homodimer.

Its subcellular location is the cytoplasm. It catalyses the reaction D-glyceraldehyde 3-phosphate = dihydroxyacetone phosphate. The protein operates within carbohydrate biosynthesis; gluconeogenesis. Its pathway is carbohydrate degradation; glycolysis; D-glyceraldehyde 3-phosphate from glycerone phosphate: step 1/1. Involved in the gluconeogenesis. Catalyzes stereospecifically the conversion of dihydroxyacetone phosphate (DHAP) to D-glyceraldehyde-3-phosphate (G3P). The polypeptide is Triosephosphate isomerase (Chlamydia abortus (strain DSM 27085 / S26/3) (Chlamydophila abortus)).